The chain runs to 428 residues: Histidine--tRNA ligase (428 aa).

It belongs to the class-II aminoacyl-tRNA synthetase family. As to quaternary structure, homodimer.

Its subcellular location is the cytoplasm. The catalysed reaction is tRNA(His) + L-histidine + ATP = L-histidyl-tRNA(His) + AMP + diphosphate + H(+). This Bordetella pertussis (strain Tohama I / ATCC BAA-589 / NCTC 13251) protein is Histidine--tRNA ligase.